An 887-amino-acid chain; its full sequence is Phosphatidylinositol 3-kinase catalytic subunit type 3 (887 aa).

The 150-residue stretch at tyrosine 35–glutamine 184 folds into the C2 PI3K-type domain. Residues glutamate 150–aspartate 170 are disordered. A compositionally biased stretch (polar residues) spans proline 156 to aspartate 170. Position 163 is a phosphothreonine; by AMPK (threonine 163). A Phosphoserine; by AMPK modification is found at serine 165. 3 positions are modified to phosphoserine: serine 244, serine 261, and serine 282. Residues serine 282–valine 520 enclose the PIK helical domain. Disordered regions lie at residues glutamate 416–isoleucine 435 and isoleucine 446–glycine 468. The span at glutamine 423–isoleucine 435 shows a compositional bias: low complexity. The segment covering proline 449 to alanine 459 has biased composition (pro residues). One can recognise a PI3K/PI4K catalytic domain in the interval isoleucine 605 to phenylalanine 871. The G-loop stretch occupies residues leucine 611–methionine 617. A catalytic loop region spans residues glycine 740 to asparagine 748. Residues histidine 759–asparagine 780 are activation loop.

It belongs to the PI3/PI4-kinase family. As to quaternary structure, component of the PI3K (PI3KC3/PI3K-III/class III phosphatidylinositol 3-kinase) complex the core of which is composed of the catalytic subunit PIK3C3, the regulatory subunit PIK3R4 and BECN1 associating with additional regulatory/auxiliary subunits to form alternative complex forms. Alternative complex forms containing a fourth regulatory subunit in a mutually exclusive manner are: the PI3K complex I (PI3KC3-C1) containing ATG14, and the PI3K complex II (PI3KC3-C2) containing UVRAG. PI3KC3-C1 displays a V-shaped architecture with PIK3R4 serving as a bridge between PIK3C3 and the ATG14:BECN1 subcomplex. Both, PI3KC3-C1 and PI3KC3-C2, can associate with further regulatory subunits such as RUBCN, SH3GLB1/Bif-1 and AMBRA1. PI3KC3-C1 probably associates with PIK3CB. Interacts with RAB7A in the presence of PIK3R4. Interacts with AMBRA1. Interacts with BECN1P1/BECN2. Interacts with SLAMF1. May be a component of a complex composed of RAB5A (in GDP-bound form), DYN2 and PIK3C3. Interacts with NCKAP1L. Interacts with ATG14; this interaction is increased in the absence of TMEM39A. Interacts with STEEP1; the interaction is STING1-dependent and required for trafficking of STING1 from the endoplasmic reticulum. Interacts with YWHAG. Interacts with ARMC3. Requires Mn(2+) as cofactor. Ubiquitinated via 'Lys-29'- and 'Lys-48'-linked ubiquitination by UBE3C, promoting its degradation. Deubiquitination by ZRANB1/TRABID promotes its stabilization, leading to autophagosome maturation.

It is found in the midbody. The protein resides in the late endosome. Its subcellular location is the cytoplasmic vesicle. It localises to the autophagosome. It carries out the reaction a 1,2-diacyl-sn-glycero-3-phospho-(1D-myo-inositol) + ATP = a 1,2-diacyl-sn-glycero-3-phospho-(1D-myo-inositol-3-phosphate) + ADP + H(+). In terms of biological role, catalytic subunit of the PI3K complex that mediates formation of phosphatidylinositol 3-phosphate; different complex forms are believed to play a role in multiple membrane trafficking pathways: PI3KC3-C1 is involved in initiation of autophagosomes and PI3KC3-C2 in maturation of autophagosomes and endocytosis. As part of PI3KC3-C1, promotes endoplasmic reticulum membrane curvature formation prior to vesicle budding. Involved in regulation of degradative endocytic trafficking and required for the abscission step in cytokinesis, probably in the context of PI3KC3-C2. Involved in the transport of lysosomal enzyme precursors to lysosomes. Required for transport from early to late endosomes. The sequence is that of Phosphatidylinositol 3-kinase catalytic subunit type 3 from Sus scrofa (Pig).